The primary structure comprises 302 residues: Surfeit locus protein 4 homolog (302 aa).

6 helical membrane-spanning segments follow: residues 95-115 (APLL…LVVF), 120-140 (AYAI…YGLI), 193-213 (VLLI…ISWT), 215-235 (ILVH…FKAK), 236-256 (FFAA…NSFW), and 271-291 (DFFQ…TGPG). The short motif at 299 to 302 (KKIY) is the Di-lysine motif element.

The protein belongs to the SURF4 family.

The protein resides in the endoplasmic reticulum membrane. In Schizosaccharomyces pombe (strain 972 / ATCC 24843) (Fission yeast), this protein is Surfeit locus protein 4 homolog.